The sequence spans 258 residues: Snake venom serine protease 1 (258 aa).

An N-terminal signal peptide occupies residues 1-18 (MVLIRVLANLLILQLSYA). A propeptide spanning residues 19–24 (QKSSEL) is cleaved from the precursor. Residues 25 to 249 (VVGGDECNIN…YNDWIKSIIA (225 aa)) form the Peptidase S1 domain. 6 disulfides stabilise this stretch: C31-C163, C50-C66, C98-C256, C142-C210, C174-C189, and C200-C225. A glycan (N-linked (GlcNAc...) asparagine) is linked at N44. Catalysis depends on charge relay system residues H65 and D110. S204 functions as the Charge relay system in the catalytic mechanism.

The protein belongs to the peptidase S1 family. Snake venom subfamily. In terms of assembly, monomer. In terms of tissue distribution, expressed by the venom gland.

The protein resides in the secreted. Snake venom serine protease that may act in the hemostasis system of the prey. This Craspedocephalus gramineus (Bamboo pit viper) protein is Snake venom serine protease 1 (TLG1).